Consider the following 323-residue polypeptide: MFEQEAWQPSAPIKTLFTRAKIIREIRKFFTERGLLEVETPVLSEFGVTDVHLSTFNTEFIAPIGENSKTLWLMTSPEYHMKRLLAAGSGAIFQICRVFRNEEAGSRHNPEFTMLEWYRPHFDMYRLINEVDDLLQQILDCEPAESFSYQFVFQQYVGLDPLSAPRAELVAKAREHHFMCDENEERDTLLEFLFSTVVEPQIGQTRPAVIYHFPASQAALAQISSEDHRVAERFEFYFKGLELANGFNELTDANEQLIRFERDNRQREKMGLPQRAIDKRLLAALEAGMPNCAGVALGVDRLLMAALNANRIEEVMAFGVNNA.

76–78 (SPE) contributes to the substrate binding site. ATP-binding positions include 100 to 102 (RNE) and Asn-109. Residue Tyr-118 participates in substrate binding. ATP is bound at residue 242-243 (EL). Glu-249 lines the substrate pocket. Residue Gly-298 coordinates ATP.

It belongs to the class-II aminoacyl-tRNA synthetase family. EpmA subfamily. Homodimer.

It catalyses the reaction D-beta-lysine + L-lysyl-[protein] + ATP = N(6)-((3R)-3,6-diaminohexanoyl)-L-lysyl-[protein] + AMP + diphosphate + H(+). In terms of biological role, with EpmB is involved in the beta-lysylation step of the post-translational modification of translation elongation factor P (EF-P). Catalyzes the ATP-dependent activation of (R)-beta-lysine produced by EpmB, forming a lysyl-adenylate, from which the beta-lysyl moiety is then transferred to the epsilon-amino group of a conserved specific lysine residue in EF-P. The polypeptide is Elongation factor P--(R)-beta-lysine ligase (Mannheimia succiniciproducens (strain KCTC 0769BP / MBEL55E)).